The following is a 115-amino-acid chain: uncharacterized protein (115 aa).

Transmembrane regions (helical) follow at residues 7–27 (TLIFFPLILQIVVTALLIWFD), 40–60 (YALTAFLLAAIPAFLTALLAA), and 72–92 (IVLVSSIISFVYCNMASYFYL).

The protein resides in the cell membrane. This is an uncharacterized protein from Haemophilus influenzae (strain ATCC 51907 / DSM 11121 / KW20 / Rd).